We begin with the raw amino-acid sequence, 550 residues long: Putative pentatricopeptide repeat-containing protein At5g37570 (550 aa).

12 PPR repeats span residues 73–107 (GTYLWNHLIKGYSNKFLFFETVSILMRMMRTGLAR), 109–143 (DEYTFPLVMKVCSNNGQVRVGSSVHGLVLRIGFDK), 144–174 (DVVVGTSFVDFYGKCKDLFSARKVFGEMPER), 175–205 (NAVSWTALVVAYVKSGELEEAKSMFDLMPER), 206–240 (NLGSWNALVDGLVKSGDLVNAKKLFDEMPKRDIIS), 241–267 (YTSMIDGYAKGGDMVSARDLFEEARGV), 268–302 (DVRAWSALILGYAQNGQPNEAFKVFSEMCAKNVKP), 303–333 (DEFIMVGLMSACSQMGCFELCEKVDSYLHQR), 339–369 (SHYVVPALIDMNAKCGHMDRAAKLFEEMPQR), 370–404 (DLVSYCSMMEGMAIHGCGSEAIRLFEKMVDEGIVP), 405–435 (DEVAFTVILKVCGQSRLVEEGLRYFELMRKK), and 441–475 (SPDHYSCIVNLLSRTGKLKEAYELIKSMPFEAHAS). A type E motif region spans residues 476 to 550 (AWGSLLGGCS…KICGRSWISR (75 aa)).

It belongs to the PPR family. PCMP-E subfamily.

In Arabidopsis thaliana (Mouse-ear cress), this protein is Putative pentatricopeptide repeat-containing protein At5g37570 (PCMP-E37).